Reading from the N-terminus, the 216-residue chain is Ribosomal RNA large subunit methyltransferase E (216 aa).

Glycine 60, tryptophan 62, aspartate 80, aspartate 96, and aspartate 121 together coordinate S-adenosyl-L-methionine. Lysine 161 (proton acceptor) is an active-site residue.

It belongs to the class I-like SAM-binding methyltransferase superfamily. RNA methyltransferase RlmE family.

It localises to the cytoplasm. The enzyme catalyses uridine(2552) in 23S rRNA + S-adenosyl-L-methionine = 2'-O-methyluridine(2552) in 23S rRNA + S-adenosyl-L-homocysteine + H(+). Functionally, specifically methylates the uridine in position 2552 of 23S rRNA at the 2'-O position of the ribose in the fully assembled 50S ribosomal subunit. This Pseudomonas fluorescens (strain SBW25) protein is Ribosomal RNA large subunit methyltransferase E.